A 382-amino-acid polypeptide reads, in one-letter code: PqqA peptide cyclase (382 aa).

In terms of domain architecture, Radical SAM core spans 8-223 (VKPPLWLLAE…VHRYREKMAA (216 aa)). The [4Fe-4S] cluster site is built by cysteine 22, cysteine 26, and cysteine 29.

The protein belongs to the radical SAM superfamily. PqqE family. In terms of assembly, interacts with PqqD. The interaction is necessary for activity of PqqE. Requires [4Fe-4S] cluster as cofactor.

It catalyses the reaction [PQQ precursor protein] + S-adenosyl-L-methionine = E-Y cross-linked-[PQQ precursor protein] + 5'-deoxyadenosine + L-methionine + H(+). The protein operates within cofactor biosynthesis; pyrroloquinoline quinone biosynthesis. In terms of biological role, catalyzes the cross-linking of a glutamate residue and a tyrosine residue in the PqqA protein as part of the biosynthesis of pyrroloquinoline quinone (PQQ). This chain is PqqA peptide cyclase, found in Erwinia tasmaniensis (strain DSM 17950 / CFBP 7177 / CIP 109463 / NCPPB 4357 / Et1/99).